The following is a 480-amino-acid chain: Glutamyl-tRNA(Gln) amidotransferase subunit A (480 aa).

Active-site charge relay system residues include K74 and S149. Catalysis depends on S173, which acts as the Acyl-ester intermediate.

This sequence belongs to the amidase family. GatA subfamily. As to quaternary structure, heterotrimer of A, B and C subunits.

The enzyme catalyses L-glutamyl-tRNA(Gln) + L-glutamine + ATP + H2O = L-glutaminyl-tRNA(Gln) + L-glutamate + ADP + phosphate + H(+). Its function is as follows. Allows the formation of correctly charged Gln-tRNA(Gln) through the transamidation of misacylated Glu-tRNA(Gln) in organisms which lack glutaminyl-tRNA synthetase. The reaction takes place in the presence of glutamine and ATP through an activated gamma-phospho-Glu-tRNA(Gln). This chain is Glutamyl-tRNA(Gln) amidotransferase subunit A, found in Vesicomyosocius okutanii subsp. Calyptogena okutanii (strain HA).